The primary structure comprises 649 residues: MEHHKPLLPTSSHAAPTSSTRKDLLFVLCGLLFLSSLVAYGGYRASGVPHAHLSSPTSNHQQDHQSPTSLPSSKWYPVSRGVSSGVSEKSSNLLFAGEGGASEAFPWDNSMLSWQRTSFHFQPEKNWMNDPNGPMYYKGWYHFFYQYNPNGAVWGDIVWGHAVSRDMIHWLHLPLAMVADQWYDKQGVWTGSATILPNGEIIMLYTGSTNESVQVQNLAYPADPSDPLLLDWIKHTGNPVLVPPPGIGAKDFRDPTTAWLTSEGKWRITIGSKLNKTGIALVYDTEDFKTYELKEGLLRAVPGTGMWECVDFFPVSKKNGNGLDTSVNGAEVKHVMKVSLDDDRHDYYAIGTYDDNKVLFTPDDVKNDVGVGLRYDYGIFYASKTFYDQNKDRRILWGWIGESDSEYADVTKGWASVQSIPRTVRLDTKTGSNLLQWPVDEVESLRLRSDEFKSLKAKPGSVVSLDIETATQLDVVAEFEIDTESLEKTAESNEEFTCSSSGGAAQRGALGPFGLLVLADEGLSEYTPVYFYVIKGRNGNLRTSFCSDQSRSSQANDVRKQIFGSVVPVLKGEKFSLRMLVDHSIVESFAQGGRTCVTSRVYPTKAIYGAARLFLFNNATEATVTASLKVWQMNSAFIRPFPFNPDQKS.

The Cytoplasmic portion of the chain corresponds to 1-22; the sequence is MEHHKPLLPTSSHAAPTSSTRK. A propeptide spans 1-101 (removed in mature form); sequence MEHHKPLLPT…NLLFAGEGGA (101 aa). Residues 23-43 form a helical; Signal-anchor for type II membrane protein membrane-spanning segment; that stretch reads DLLFVLCGLLFLSSLVAYGGY. At 44-649 the chain is on the lumenal side; that stretch reads RASGVPHAHL…PFPFNPDQKS (606 aa). The segment at 52-75 is disordered; sequence HLSSPTSNHQQDHQSPTSLPSSKW. The span at 54-72 shows a compositional bias: polar residues; it reads SSPTSNHQQDHQSPTSLPS. Residues 127 to 130, glutamine 146, tryptophan 154, and 189 to 190 each bind substrate; these read WMND and WT. The active site involves aspartate 130. Asparagine 210 carries an N-linked (GlcNAc...) (complex) asparagine glycan. 253–254 lines the substrate pocket; it reads RD. The N-linked (GlcNAc...) (complex) asparagine glycan is linked to asparagine 275. Glutamate 308 and aspartate 341 together coordinate substrate. Cysteine 498 and cysteine 546 are oxidised to a cystine. Asparagine 618 carries N-linked (GlcNAc...) (high mannose) asparagine glycosylation.

The protein belongs to the glycosyl hydrolase 32 family. Present in two forms, a 70 kDa monomer and a heterodimer of the 30 kDa and 38 kDa subunits. The ratio of the levels of the two forms within cells appears to be regulated developmentally.

It localises to the membrane. It is found in the vacuole lumen. The catalysed reaction is Hydrolysis of terminal non-reducing beta-D-fructofuranoside residues in beta-D-fructofuranosides.. It functions in the pathway glycan biosynthesis; sucrose metabolism. Possible role in the continued mobilization of sucrose to sink organs. The chain is Acid beta-fructofuranosidase (INVA) from Vigna radiata var. radiata (Mung bean).